The sequence spans 260 residues: NH(3)-dependent NAD(+) synthetase (260 aa).

ATP is bound at residue Gly31 to Ser38. Asp37 serves as a coordination point for Mg(2+). Arg112 is a deamido-NAD(+) binding site. Residue Thr132 participates in ATP binding. A Mg(2+)-binding site is contributed by Glu137. 2 residues coordinate ATP: Lys161 and Ser183.

The protein belongs to the NAD synthetase family. In terms of assembly, homodimer.

It catalyses the reaction deamido-NAD(+) + NH4(+) + ATP = AMP + diphosphate + NAD(+) + H(+). Its pathway is cofactor biosynthesis; NAD(+) biosynthesis; NAD(+) from deamido-NAD(+) (ammonia route): step 1/1. Its function is as follows. Catalyzes the ATP-dependent amidation of deamido-NAD to form NAD. Uses ammonia as a nitrogen source. The chain is NH(3)-dependent NAD(+) synthetase from Helicobacter pylori (strain ATCC 700392 / 26695) (Campylobacter pylori).